The primary structure comprises 496 residues: Apolipoprotein N-acyltransferase (496 aa).

The next 6 helical transmembrane spans lie at 23 to 43, 50 to 70, 84 to 104, 126 to 146, 171 to 191, and 205 to 225; these read GIATSTHFWLLFMPLSLFILW, LANFLWGFFFILVSHSWLYEL, LIISISILFGCSIIGGILVYL, LTIKVLLLSFAWGIGEFILSQ, WIGASGLCVVQLTIGFWIYLI, and FLFGLLILVILHFLGGLTNPI. In terms of domain architecture, CN hydrolase spans 236–464; sequence WQTNMPTREK…NDVVNPNFSI (229 aa). E276 (proton acceptor) is an active-site residue. K325 is a catalytic residue. The active-site Nucleophile is C374. Residues 476 to 496 traverse the membrane as a helical segment; the sequence is PLFLLCLFLIGLNLYFGKFTN.

This sequence belongs to the CN hydrolase family. Apolipoprotein N-acyltransferase subfamily.

The protein localises to the cell inner membrane. It catalyses the reaction N-terminal S-1,2-diacyl-sn-glyceryl-L-cysteinyl-[lipoprotein] + a glycerophospholipid = N-acyl-S-1,2-diacyl-sn-glyceryl-L-cysteinyl-[lipoprotein] + a 2-acyl-sn-glycero-3-phospholipid + H(+). Its pathway is protein modification; lipoprotein biosynthesis (N-acyl transfer). Its function is as follows. Catalyzes the phospholipid dependent N-acylation of the N-terminal cysteine of apolipoprotein, the last step in lipoprotein maturation. In Prochlorococcus marinus subsp. pastoris (strain CCMP1986 / NIES-2087 / MED4), this protein is Apolipoprotein N-acyltransferase.